The sequence spans 268 residues: Ubiquinone biosynthesis protein COQ4 homolog 1, mitochondrial (268 aa).

The segment covering 1 to 10 has biased composition (basic residues); that stretch reads MFLRRVHPVR. The N-terminal 18 residues, 1–18, are a transit peptide targeting the mitochondrion; it reads MFLRRVHPVRLGHASQRS. Residues 1–44 form a disordered region; sequence MFLRRVHPVRLGHASQRSLTTTKSRNESTTTTVEAPQAAPSPPP. Residues 20 to 38 are compositionally biased toward low complexity; that stretch reads TTTKSRNESTTTTVEAPQA. Zn(2+) contacts are provided by His177, Asp178, His181, and Glu193.

The protein belongs to the COQ4 family. In terms of assembly, component of a multi-subunit COQ enzyme complex. It depends on Zn(2+) as a cofactor.

It localises to the mitochondrion inner membrane. The catalysed reaction is a 4-hydroxy-3-methoxy-5-(all-trans-polyprenyl)benzoate + H(+) = a 2-methoxy-6-(all-trans-polyprenyl)phenol + CO2. Its pathway is cofactor biosynthesis; ubiquinone biosynthesis. Functionally, lyase that catalyzes the C1-decarboxylation of 4-hydroxy-3-methoxy-5-(all-trans-polyprenyl)benzoic acid into 2-methoxy-6-(all-trans-polyprenyl)phenol during ubiquinone biosynthesis. This Culex quinquefasciatus (Southern house mosquito) protein is Ubiquinone biosynthesis protein COQ4 homolog 1, mitochondrial.